Consider the following 429-residue polypeptide: Adenylosuccinate synthetase (429 aa).

GTP contacts are provided by residues 12–18 (GDEGKGK) and 40–42 (GHT). The active-site Proton acceptor is Asp13. Residues Asp13 and Gly40 each contribute to the Mg(2+) site. IMP is bound by residues 13–16 (DEGK), 38–41 (NAGH), Thr129, Arg143, Gln223, Thr238, and Arg302. His41 (proton donor) is an active-site residue. Residue 298–304 (TVTGRRR) coordinates substrate. Residues Arg304, 330-332 (KLD), and 412-414 (STS) each bind GTP.

The protein belongs to the adenylosuccinate synthetase family. As to quaternary structure, homodimer. Requires Mg(2+) as cofactor.

It localises to the cytoplasm. The enzyme catalyses IMP + L-aspartate + GTP = N(6)-(1,2-dicarboxyethyl)-AMP + GDP + phosphate + 2 H(+). It functions in the pathway purine metabolism; AMP biosynthesis via de novo pathway; AMP from IMP: step 1/2. Functionally, plays an important role in the de novo pathway of purine nucleotide biosynthesis. Catalyzes the first committed step in the biosynthesis of AMP from IMP. This is Adenylosuccinate synthetase from Zymomonas mobilis subsp. mobilis (strain ATCC 31821 / ZM4 / CP4).